A 336-amino-acid polypeptide reads, in one-letter code: Izumo sperm-egg fusion protein 1 (336 aa).

A signal peptide spans 1-16; it reads MTLPILLGWFLTLCSS. The Ig-like C2-type domain maps to 158–247; sequence PPLDCGEHHL…LKDQKGTALS (90 aa). A disulfide bridge connects residues C179 and C236. The helical transmembrane segment at 287–307 threads the bilayer; that stretch reads SFLTVLILLTVLSITGSLIII.

Belongs to the Izumo family. As to quaternary structure, forms a complex with tmem81 and spaca6 on spermatocyte cell membrane. The complex binds to oocyte protein bncr. As to expression, expressed in sperm.

It localises to the cell membrane. Its subcellular location is the cytoplasmic vesicle. It is found in the secretory vesicle. The protein localises to the acrosome membrane. Its function is as follows. Essential sperm cell-surface protein required for fertilization by acting as a ligand for bncr receptor on egg. The interaction of the complex izumo1:spaca6:tmemt81 with bncr is a necessary adhesion event between sperm and egg that is required for fertilization. This chain is Izumo sperm-egg fusion protein 1, found in Danio rerio (Zebrafish).